Here is a 126-residue protein sequence, read N- to C-terminus: Holo-[acyl-carrier-protein] synthase (126 aa).

Asp9 and Glu58 together coordinate Mg(2+).

Belongs to the P-Pant transferase superfamily. AcpS family. Mg(2+) serves as cofactor.

It is found in the cytoplasm. The enzyme catalyses apo-[ACP] + CoA = holo-[ACP] + adenosine 3',5'-bisphosphate + H(+). Transfers the 4'-phosphopantetheine moiety from coenzyme A to a Ser of acyl-carrier-protein. The chain is Holo-[acyl-carrier-protein] synthase from Escherichia coli O127:H6 (strain E2348/69 / EPEC).